The chain runs to 108 residues: UPF0145 protein gll1048 (108 aa).

Belongs to the UPF0145 family.

The sequence is that of UPF0145 protein gll1048 from Gloeobacter violaceus (strain ATCC 29082 / PCC 7421).